The sequence spans 315 residues: uncharacterized protein (315 aa).

A compositionally biased stretch (polar residues) spans 1-23 (MSNTDALNTANTQITENVDTSSM). The interval 1–31 (MSNTDALNTANTQITENVDTSSMKVEKTHDS) is disordered.

This is an uncharacterized protein from Acanthamoeba polyphaga mimivirus (APMV).